Here is a 221-residue protein sequence, read N- to C-terminus: MRLILLGAPGAGKGTQATFIKEKFGIPQISTGDMLRAAVKAGTPLGLEAKRFMDAGELVTDELIINLVKERLQQPDCANGYLFDGFPRTIPQAEAMKQAGVAIDYVLEIDVPFEEIIVRMSGRRSHAASGRTYHVKFNPPKVEGLDDVTGEPLIQRDDDKEETVKKRLEVYEAQTKPLIEYYTNWAKNGDSSTPLKAPQYRRISGLGSVDEIRERAFEALK.

10–15 contacts ATP; that stretch reads GAGKGT. The interval 30 to 59 is NMP; sequence STGDMLRAAVKAGTPLGLEAKRFMDAGELV. AMP is bound by residues threonine 31, arginine 36, 57-59, 85-88, and glutamine 92; these read ELV and GFPR. The tract at residues 122 to 159 is LID; that stretch reads GRRSHAASGRTYHVKFNPPKVEGLDDVTGEPLIQRDDD. Residues arginine 123 and 132–133 each bind ATP; that span reads TY. Residues arginine 156 and arginine 167 each coordinate AMP. Glycine 207 provides a ligand contact to ATP.

This sequence belongs to the adenylate kinase family. As to quaternary structure, monomer.

It is found in the cytoplasm. The enzyme catalyses AMP + ATP = 2 ADP. Its pathway is purine metabolism; AMP biosynthesis via salvage pathway; AMP from ADP: step 1/1. Its function is as follows. Catalyzes the reversible transfer of the terminal phosphate group between ATP and AMP. Plays an important role in cellular energy homeostasis and in adenine nucleotide metabolism. The sequence is that of Adenylate kinase from Paraburkholderia xenovorans (strain LB400).